A 566-amino-acid chain; its full sequence is NXPE family member 3 (566 aa).

A signal peptide spans M1–S32. N-linked (GlcNAc...) asparagine glycans are attached at residues N64, N172, N242, N303, and N344.

The protein belongs to the NXPE family.

Its subcellular location is the secreted. In Danio rerio (Zebrafish), this protein is NXPE family member 3 (nxpe3).